Reading from the N-terminus, the 340-residue chain is Ketol-acid reductoisomerase (NADP(+)) (340 aa).

The region spanning 3–182 (VTMYYEEDVE…GCARVGIIET (180 aa)) is the KARI N-terminal Rossmann domain. NADP(+) is bound by residues 26-29 (YGSQ), R49, S53, and 83-86 (DELQ). H108 is an active-site residue. G134 is an NADP(+) binding site. In terms of domain architecture, KARI C-terminal knotted spans 183–328 (TFKEETEEDL…AELRKAMPFT (146 aa)). Mg(2+) is bound by residues D191, E195, E227, and E231. Substrate is bound at residue S252.

Belongs to the ketol-acid reductoisomerase family. Requires Mg(2+) as cofactor.

The catalysed reaction is (2R)-2,3-dihydroxy-3-methylbutanoate + NADP(+) = (2S)-2-acetolactate + NADPH + H(+). It catalyses the reaction (2R,3R)-2,3-dihydroxy-3-methylpentanoate + NADP(+) = (S)-2-ethyl-2-hydroxy-3-oxobutanoate + NADPH + H(+). Its pathway is amino-acid biosynthesis; L-isoleucine biosynthesis; L-isoleucine from 2-oxobutanoate: step 2/4. The protein operates within amino-acid biosynthesis; L-valine biosynthesis; L-valine from pyruvate: step 2/4. Its function is as follows. Involved in the biosynthesis of branched-chain amino acids (BCAA). Catalyzes an alkyl-migration followed by a ketol-acid reduction of (S)-2-acetolactate (S2AL) to yield (R)-2,3-dihydroxy-isovalerate. In the isomerase reaction, S2AL is rearranged via a Mg-dependent methyl migration to produce 3-hydroxy-3-methyl-2-ketobutyrate (HMKB). In the reductase reaction, this 2-ketoacid undergoes a metal-dependent reduction by NADPH to yield (R)-2,3-dihydroxy-isovalerate. This is Ketol-acid reductoisomerase (NADP(+)) from Lactococcus lactis subsp. cremoris (strain SK11).